Reading from the N-terminus, the 137-residue chain is Small ribosomal subunit protein eS17 (137 aa).

The protein belongs to the eukaryotic ribosomal protein eS17 family. In terms of assembly, component of the small ribosomal subunit. Mature ribosomes consist of a small (40S) and a large (60S) subunit. The 40S subunit contains about 32 different proteins and 1 molecule of RNA (18S). The 60S subunit contains 45 different proteins and 3 molecules of RNA (25S, 5.8S and 5S).

It is found in the cytoplasm. In terms of biological role, component of the ribosome, a large ribonucleoprotein complex responsible for the synthesis of proteins in the cell. The small ribosomal subunit (SSU) binds messenger RNAs (mRNAs) and translates the encoded message by selecting cognate aminoacyl-transfer RNA (tRNA) molecules. The large subunit (LSU) contains the ribosomal catalytic site termed the peptidyl transferase center (PTC), which catalyzes the formation of peptide bonds, thereby polymerizing the amino acids delivered by tRNAs into a polypeptide chain. The nascent polypeptides leave the ribosome through a tunnel in the LSU and interact with protein factors that function in enzymatic processing, targeting, and the membrane insertion of nascent chains at the exit of the ribosomal tunnel. The sequence is that of Small ribosomal subunit protein eS17 (RPS17B) from Candida albicans (strain SC5314 / ATCC MYA-2876) (Yeast).